A 295-amino-acid polypeptide reads, in one-letter code: Ankyrin repeat and SOCS box protein 17 (295 aa).

One copy of the ANK repeat lies at 146–176 (SGITPLFYVAQTRQSNIFKILLQYGILEREK). Residues 232–295 (LGRHPIISNW…RLQNYLNLEI (64 aa)) form the SOCS box domain.

It belongs to the ankyrin SOCS box (ASB) family. Specifically expressed in testis. Not detected in other tissues tested.

The protein operates within protein modification; protein ubiquitination. May be a substrate-recognition component of a SCF-like ECS (Elongin-Cullin-SOCS-box protein) E3 ubiquitin-protein ligase complex which mediates the ubiquitination and subsequent proteasomal degradation of target proteins. In Homo sapiens (Human), this protein is Ankyrin repeat and SOCS box protein 17 (ASB17).